A 1379-amino-acid polypeptide reads, in one-letter code: DNA-directed RNA polymerase subunit beta'' (1379 aa).

Zn(2+) contacts are provided by Cys224, Cys295, Cys302, and Cys305. The tract at residues 503–524 (SVQSLSVKRRSTSKLSETNDEA) is disordered.

This sequence belongs to the RNA polymerase beta' chain family. RpoC2 subfamily. As to quaternary structure, in plastids the minimal PEP RNA polymerase catalytic core is composed of four subunits: alpha, beta, beta', and beta''. When a (nuclear-encoded) sigma factor is associated with the core the holoenzyme is formed, which can initiate transcription. The cofactor is Zn(2+).

It localises to the plastid. It carries out the reaction RNA(n) + a ribonucleoside 5'-triphosphate = RNA(n+1) + diphosphate. DNA-dependent RNA polymerase catalyzes the transcription of DNA into RNA using the four ribonucleoside triphosphates as substrates. In Cuscuta exaltata (Tall dodder), this protein is DNA-directed RNA polymerase subunit beta''.